A 121-amino-acid polypeptide reads, in one-letter code: Small ribosomal subunit protein uS13 (121 aa).

The interval 93–121 (RNLPVRGQRTRTNARTCKGPRKSMNKQFK) is disordered. Residues 110–121 (KGPRKSMNKQFK) are compositionally biased toward basic residues.

This sequence belongs to the universal ribosomal protein uS13 family. Part of the 30S ribosomal subunit. Forms a loose heterodimer with protein S19. Forms two bridges to the 50S subunit in the 70S ribosome.

Its function is as follows. Located at the top of the head of the 30S subunit, it contacts several helices of the 16S rRNA. In the 70S ribosome it contacts the 23S rRNA (bridge B1a) and protein L5 of the 50S subunit (bridge B1b), connecting the 2 subunits; these bridges are implicated in subunit movement. Contacts the tRNAs in the A and P-sites. This chain is Small ribosomal subunit protein uS13, found in Blochmanniella pennsylvanica (strain BPEN).